The following is a 698-amino-acid chain: Dolichyl-diphosphooligosaccharide--protein glycosyltransferase subunit 2 (698 aa).

The signal sequence occupies residues 1–29 (MAAAGGLPASATLLLLVIAAVAVAPLASA). Topologically, residues 30-600 (VRPVSDAHRS…RSPEKRPPKE (571 aa)) are lumenal. Residues 601–621 (LSFAFTGLTLLPIVGFLIGLM) traverse the membrane as a helical segment. Residues 622–638 (RLGVNLKNFPSLPAPAA) lie on the Cytoplasmic side of the membrane. Residues 639–659 (FASLFHAGIGAVLLLYVLFWI) form a helical membrane-spanning segment. Residue Lys660 is a topological domain, lumenal. A helical transmembrane segment spans residues 661-681 (LDLFTTLKYLSFLGVFLVFVG). Topologically, residues 682–698 (HRALSYLSSTSAKQKTA) are cytoplasmic.

The protein belongs to the SWP1 family. As to quaternary structure, component of the oligosaccharyltransferase (OST) complex.

The protein localises to the endoplasmic reticulum membrane. It functions in the pathway protein modification; protein glycosylation. In terms of biological role, subunit of the oligosaccharyl transferase (OST) complex that catalyzes the initial transfer of a defined glycan (Glc(3)Man(9)GlcNAc(2) in eukaryotes) from the lipid carrier dolichol-pyrophosphate to an asparagine residue within an Asn-X-Ser/Thr consensus motif in nascent polypeptide chains, the first step in protein N-glycosylation. N-glycosylation occurs cotranslationally and the complex associates with the Sec61 complex at the channel-forming translocon complex that mediates protein translocation across the endoplasmic reticulum (ER). All subunits are required for a maximal enzyme activity. This is Dolichyl-diphosphooligosaccharide--protein glycosyltransferase subunit 2 (RPN2) from Oryza sativa subsp. japonica (Rice).